We begin with the raw amino-acid sequence, 460 residues long: MLTIYNTLSKTKEVFKPLDGNKVRMYVCGMTVYDYCHLGHGRSMVAFDLVTRWLRKSGYELTYVRNITDIDDKIINRANENGETFDALTARMIDAMHEDERRLNILPPDQEPRATDHIAGMHAMIQTLIDKGYAYAPGNGDVYYRVGKFVGYGKLSRKRIEDLRIGARIEVDEAKQDPLDFVLWKGVKPGEPSWESPWGPGRPGWHIECSVMSTCCLGESFDIHGGGSDLEFPHHENEIAQSEAATGKQYANAWMHCGMIRINGEKMSKSLNNFFTIRDVLEKYHPEVVRYLLVASHYRSAINYSEDSLRDAKGALERFYHALRGLPRVAAKGGEAFVERFSVAMNDDFGTPEACAVLFDLVREINRLRDSDVEAAAGLAGRLRELGDVLGVLQLEADDFLRAGAEGKVDAAEVEGLIQARLKARADKNWAESDRIRDQLTAMGVVLEDSKGTTTWRLAD.

Cys28 is a Zn(2+) binding site. A 'HIGH' region motif is present at residues Met30 to His40. Positions 209, 234, and 238 each coordinate Zn(2+). Positions Lys266–Ser270 match the 'KMSKS' region motif. Position 269 (Lys269) interacts with ATP.

The protein belongs to the class-I aminoacyl-tRNA synthetase family. In terms of assembly, monomer. The cofactor is Zn(2+).

Its subcellular location is the cytoplasm. The catalysed reaction is tRNA(Cys) + L-cysteine + ATP = L-cysteinyl-tRNA(Cys) + AMP + diphosphate. The polypeptide is Cysteine--tRNA ligase (Pseudomonas putida (strain ATCC 47054 / DSM 6125 / CFBP 8728 / NCIMB 11950 / KT2440)).